The sequence spans 175 residues: Methylated-DNA--protein-cysteine methyltransferase (175 aa).

DNA contacts are provided by Tyr115 and Arg127. The active-site Nucleophile; methyl group acceptor is Cys144.

The protein belongs to the MGMT family.

The protein localises to the nucleus. It catalyses the reaction a 6-O-methyl-2'-deoxyguanosine in DNA + L-cysteinyl-[protein] = S-methyl-L-cysteinyl-[protein] + a 2'-deoxyguanosine in DNA. The enzyme catalyses a 4-O-methyl-thymidine in DNA + L-cysteinyl-[protein] = a thymidine in DNA + S-methyl-L-cysteinyl-[protein]. Functionally, involved in the cellular defense against the biological effects of O6-methylguanine (O6-MeG) and O4-methylthymine (O4-MeT) in DNA. Repairs the methylated nucleobase in DNA by stoichiometrically transferring the methyl group to a cysteine residue in the enzyme. This is a suicide reaction: the enzyme is irreversibly inactivated. The protein is Methylated-DNA--protein-cysteine methyltransferase (MGT1) of Candida albicans (strain SC5314 / ATCC MYA-2876) (Yeast).